A 146-amino-acid chain; its full sequence is VHLTADEKAAVTGLWGKVNVDEVGGEALGRLLVVYPWTQRFFDSFGDLSAASAVMGNPKVKAHGKKVLNSFSDGLKNLDNLKGTYAKLSELHCDKLHVDPENFRLLGNVLVCVLARHFGKEFTPQVQAAYQKVVSGVATALAHKYH.

At Val1 the chain carries N-acetylvaline. The region spanning His2–His146 is the Globin domain. Thr12 bears the Phosphothreonine mark. The residue at position 44 (Ser44) is a Phosphoserine. Lys59 carries the post-translational modification N6-acetyllysine. Residue His63 coordinates heme b. The residue at position 82 (Lys82) is an N6-acetyllysine. Heme b is bound at residue His92. Residue Cys93 is modified to S-nitrosocysteine. Lys144 carries the N6-acetyllysine modification.

Belongs to the globin family. As to quaternary structure, heterotetramer of two alpha chains and two beta chains. As to expression, red blood cells.

Its function is as follows. Involved in oxygen transport from the lung to the various peripheral tissues. The chain is Hemoglobin subunit beta (HBB) from Taphozous georgianus (Sharp-nosed tomb bat).